The following is a 506-amino-acid chain: Sodium-coupled neutral amino acid symporter 2 (506 aa).

Residues 1 to 23 (MKKAEMGRFNISPDEDSSSYSSN) form a disordered region. Residues 1 to 76 (MKKAEMGRFN…HPGTTSFGMS (76 aa)) are Cytoplasmic-facing. The tract at residues 1–96 (MKKAEMGRFN…SGILGLSYAM (96 aa)) is regulates protein turnover upon amino acid deprivation. 4 positions are modified to phosphoserine: S12, S21, S22, and S55. The helical transmembrane segment at 77-96 (VFNLSNAIVGSGILGLSYAM) threads the bilayer. A Na(+)-binding site is contributed by N82. The Extracellular portion of the chain corresponds to 97–102 (ANTGIA). The helical transmembrane segment at 103–123 (LFIILLTFVSIFSLYSVHLLL) threads the bilayer. The Cytoplasmic portion of the chain corresponds to 124-158 (KTANEGGSLLYEQLGYKAFGLVGKLAASGSITMQN). A helical membrane pass occupies residues 159 to 177 (IGAMSSYLFIVKYELPLVI). Residues 178 to 188 (QALTNIEDKTG) lie on the Extracellular side of the membrane. The helical transmembrane segment at 189 to 209 (LWYLNGNYLVLLVSLVVILPL) threads the bilayer. The Cytoplasmic segment spans residues 210–217 (SLFRNLGY). A helical transmembrane segment spans residues 218–238 (LGYTSGLSLLCMVFFLIVVIC). Residues 239-292 (KKFQVPCPVEAALIINETINTTLTQPTALVPALSHNVTENDSCRPHYFIFNSQT) are Extracellular-facing. Residues C245 and C281 are joined by a disulfide bond. N258 and N274 each carry an N-linked (GlcNAc...) asparagine glycan. Residues 293-313 (VYAVPILIFSFVCHPAVLPIY) form a helical membrane-spanning segment. Over 314–329 (EELKDRSRRRMMNVSK) the chain is Cytoplasmic. The helical transmembrane segment at 330-350 (ISFFAMFLMYLLAALFGYLTF) threads the bilayer. Topologically, residues 351 to 371 (YEHVESELLHTYSSILGTDIL) are extracellular. Residues 372–392 (LLIVRLAVLMAVTLTVPVVIF) traverse the membrane as a helical segment. T386 is a Na(+) binding site. At 393-413 (PIRSSVTHLLCASKDFSWWRH) the chain is on the cytoplasmic side. The chain crosses the membrane as a helical span at residues 414–434 (SLITVSILAFTNLLVIFVPTI). Over 435-436 (RD) the chain is Extracellular. Residues 437-457 (IFGFIGASAASMLIFILPSAF) traverse the membrane as a helical segment. Residues 458–472 (YIKLVKKEPMKSVQK) are Cytoplasmic-facing. The helical transmembrane segment at 473 to 495 (IGALFFLLSGVLVMTGSMALIVL) threads the bilayer. The Extracellular segment spans residues 496–506 (DWVHNAPGGGH).

It belongs to the amino acid/polyamine transporter 2 family. In terms of processing, polyubiquitination by NEDD4L regulates the degradation and the activity of SLC38A2.

It localises to the cell membrane. It carries out the reaction L-alanine(in) + Na(+)(in) = L-alanine(out) + Na(+)(out). The enzyme catalyses glycine(in) + Na(+)(in) = glycine(out) + Na(+)(out). It catalyses the reaction L-serine(in) + Na(+)(in) = L-serine(out) + Na(+)(out). The catalysed reaction is L-proline(in) + Na(+)(in) = L-proline(out) + Na(+)(out). It carries out the reaction L-methionine(in) + Na(+)(in) = L-methionine(out) + Na(+)(out). The enzyme catalyses L-histidine(in) + Na(+)(in) = L-histidine(out) + Na(+)(out). It catalyses the reaction L-asparagine(in) + Na(+)(in) = L-asparagine(out) + Na(+)(out). The catalysed reaction is L-glutamine(in) + Na(+)(in) = L-glutamine(out) + Na(+)(out). It carries out the reaction L-threonine(in) + Na(+)(in) = L-threonine(out) + Na(+)(out). The enzyme catalyses L-leucine(in) + Na(+)(in) = L-leucine(out) + Na(+)(out). It catalyses the reaction L-phenylalanine(in) + Na(+)(in) = L-phenylalanine(out) + Na(+)(out). Inhibited by N-methyl-D-glucamine. Inhibited by choline. Allosteric regulation of sodium ions binding by pH. Its function is as follows. Symporter that cotransports neutral amino acids and sodium ions from the extracellular to the intracellular side of the cell membrane. The transport is pH-sensitive, Li(+)-intolerant, electrogenic, driven by the Na(+) electrochemical gradient and cotransports of neutral amino acids and sodium ions with a stoichiometry of 1:1. May function in the transport of amino acids at the blood-brain barrier. May function in the transport of amino acids in the supply of maternal nutrients to the fetus through the placenta. Maintains a key metabolic glutamine/glutamate balance underpinning retrograde signaling by dendritic release of the neurotransmitter glutamate. Transports L-proline in differentiating osteoblasts for the efficient synthesis of proline-enriched proteins and provides proline essential for osteoblast differentiation and bone formation during bone development. In Pan paniscus (Pygmy chimpanzee), this protein is Sodium-coupled neutral amino acid symporter 2.